Reading from the N-terminus, the 268-residue chain is Indole-3-glycerol phosphate synthase (268 aa).

This sequence belongs to the TrpC family.

The enzyme catalyses 1-(2-carboxyphenylamino)-1-deoxy-D-ribulose 5-phosphate + H(+) = (1S,2R)-1-C-(indol-3-yl)glycerol 3-phosphate + CO2 + H2O. It participates in amino-acid biosynthesis; L-tryptophan biosynthesis; L-tryptophan from chorismate: step 4/5. This chain is Indole-3-glycerol phosphate synthase, found in Acinetobacter baumannii (strain AB0057).